The following is a 903-amino-acid chain: Chitin synthase 1 (903 aa).

Positions 1–154 (MDPRYGAQPQ…YQDQPQQGGG (154 aa)) are disordered. A compositionally biased stretch (polar residues) spans 67–79 (DHLNLNAAQSVDN). N-linked (GlcNAc...) asparagine glycosylation occurs at Asn-79. Residues 100–117 (YYNQPYEPRPQQQPYDQG) are compositionally biased toward low complexity. The segment covering 135–150 (HQPSDAPSEPYQDQPQ) has biased composition (polar residues). 9 helical membrane passes run 444–464 (SAFG…YVAL), 543–563 (RWLN…LDFL), 573–593 (FAFF…WFAI), 619–639 (ILGV…FVLS), 654–674 (MCWF…FIAV), 700–720 (MLII…LIML), 729–749 (LVQY…YAFC), 828–848 (GVVL…LSSA), and 875–895 (IVLW…MWFL).

This sequence belongs to the chitin synthase family. Class I subfamily.

It localises to the cell membrane. It carries out the reaction [(1-&gt;4)-N-acetyl-beta-D-glucosaminyl](n) + UDP-N-acetyl-alpha-D-glucosamine = [(1-&gt;4)-N-acetyl-beta-D-glucosaminyl](n+1) + UDP + H(+). Its function is as follows. Polymerizes chitin, a structural polymer of the cell wall and septum, by transferring the sugar moiety of UDP-GlcNAc to the non-reducing end of the growing chitin polymer. Plays an important role in nuclear sorting or distribution. The polypeptide is Chitin synthase 1 (Fusarium oxysporum f. sp. lycopersici (strain 4287 / CBS 123668 / FGSC 9935 / NRRL 34936) (Fusarium vascular wilt of tomato)).